Reading from the N-terminus, the 579-residue chain is Keratinocyte proline-rich protein (579 aa).

Residue serine 394 is modified to Phosphoserine. The segment at 526-579 is disordered; that stretch reads EAPYCGPSSYNQGQESGAGCGPGDVFPERRGQDGHGDQGNAFAGVKGEAKSAYF. The span at 551-561 shows a compositional bias: basic and acidic residues; that stretch reads FPERRGQDGHG.

Expressed in the upper layer of epidermis and psoriasis (at protein level). Expressed in the upper layer of epidermis and psoriasis.

The protein localises to the cytoplasm. In Homo sapiens (Human), this protein is Keratinocyte proline-rich protein (KPRP).